The primary structure comprises 261 residues: Acidic leucine-rich nuclear phosphoprotein 32 family member A (261 aa).

LRR repeat units follow at residues 16–37, 39–60, 61–83, and 84–105; these read QITE…TDEY, ALES…PKLP, NLKK…TTSP, and KLQY…KPLE. The region spanning 118-156 is the LRRCT domain; sequence NDATQVDNYREKIFKMLPSLNFLDGFDCNDEEVQSDGDD. 2 stretches are compositionally biased toward acidic residues: residues 145-185 and 194-229; these read CNDE…EEAN and YNDD…DGDA. The interval 145-261 is disordered; it reads CNDEEVQSDG…VRGKKRKHDG (117 aa). The segment covering 238–252 has biased composition (basic and acidic residues); that stretch reads AKDKDGEKEADESQV.

It belongs to the ANP32 family. Post-translationally, phosphorylated on serine residues.

Its subcellular location is the nucleus. The protein localises to the cytoplasm. Functionally, implicated in a number of cellular processes, including proliferation, differentiation, caspase-dependent and caspase-independent apoptosis, suppression of transformation (tumor suppressor), inhibition of protein phosphatase 2A, regulation of mRNA trafficking and stability, and inhibition of acetyltransferases as part of the INHAT (inhibitor of histone acetyltransferases) complex. The polypeptide is Acidic leucine-rich nuclear phosphoprotein 32 family member A (Anp32a) (Drosophila melanogaster (Fruit fly)).